A 167-amino-acid chain; its full sequence is Small ribosomal subunit protein uS5 (167 aa).

The 64-residue stretch at 12 to 75 (LQEKLITVNR…EKARRNMVTI (64 aa)) folds into the S5 DRBM domain.

This sequence belongs to the universal ribosomal protein uS5 family. Part of the 30S ribosomal subunit. Contacts proteins S4 and S8.

In terms of biological role, with S4 and S12 plays an important role in translational accuracy. Located at the back of the 30S subunit body where it stabilizes the conformation of the head with respect to the body. In Buchnera aphidicola subsp. Schizaphis graminum (strain Sg), this protein is Small ribosomal subunit protein uS5.